The following is a 569-amino-acid chain: Probable santalene synthase (569 aa).

Positions 284, 321, 325, 460, and 463 each coordinate (2E)-geranyl diphosphate. Residues aspartate 321 and aspartate 325 each coordinate Mg(2+). Positions 321–325 (DDAYD) match the DDXXD motif motif. Mg(2+)-binding residues include asparagine 463, threonine 467, and glutamate 471.

Belongs to the terpene synthase family. Tpsb subfamily. Mg(2+) is required as a cofactor. It depends on Mn(2+) as a cofactor.

Functionally, catalyzes the formation of santalene. In Santalum murrayanum (Bitter quandong), this protein is Probable santalene synthase (SSY).